We begin with the raw amino-acid sequence, 211 residues long: Large ribosomal subunit protein uL3 (211 aa).

It belongs to the universal ribosomal protein uL3 family. In terms of assembly, part of the 50S ribosomal subunit. Forms a cluster with proteins L14 and L19.

One of the primary rRNA binding proteins, it binds directly near the 3'-end of the 23S rRNA, where it nucleates assembly of the 50S subunit. This is Large ribosomal subunit protein uL3 from Akkermansia muciniphila (strain ATCC BAA-835 / DSM 22959 / JCM 33894 / BCRC 81048 / CCUG 64013 / CIP 107961 / Muc).